The chain runs to 116 residues: Galanin-like peptide (116 aa).

Residues 1–24 (MAPPSVPLVLLLVLLLSLAETPAS) form the signal peptide. Residues 87-116 (NVMETFAKPEIGDLGMLSMKIPKEEDVLKS) constitute a propeptide that is removed on maturation.

The protein belongs to the galanin family. As to expression, isoform 2 is found in ganglia of ganglioneuroma and ganglioneuroblastoma, as well as in differentiated tumor cells of neuroblastoma tissues. Not found in undifferentiated neuroblasts. Isoform 2 is found in the skin, in pericytes covering microvascular arterioles and venules on their abluminal surfaces. In larger vessels, isoform 2 is expressed in layers of smooth muscle cells. Isoform 2 is not detected in endothelial cells.

It is found in the secreted. Functionally, hypothalamic neuropeptide which binds to the G-protein-coupled galanin receptors (GALR1, GALR2 and GALR3). Involved in a large number of putative physiological functions in CNS homeostatic processes, including the regulation of gonadotropin-releasing hormone secretion. Its function is as follows. Exhibits potent and dose-dependent vasoconstrictor and anti-edema activity in the cutaneous microvasculature, a physiologic effects which does not appear to be mediated via GALR1 or GALR2. Exhibits antimicrobial activity against Gram-negative bacterias, inducing bacterial membrane blebbing. The polypeptide is Galanin-like peptide (GALP) (Homo sapiens (Human)).